We begin with the raw amino-acid sequence, 349 residues long: Cbb3-type cytochrome c oxidase subunit CcoP (349 aa).

A disordered region spans residues 1–67 (MADTDDEHAS…RVVRDRKGGR (67 aa)). Topologically, residues 1–96 (MADTDDEHAS…NPLPRWWLWT (96 aa)) are cytoplasmic. The segment covering 16–30 (NRIELERQAADEAHK) has biased composition (basic and acidic residues). The chain crosses the membrane as a helical span at residues 97–117 (FYATIVWGVLYLIAYPAIPLV). Topologically, residues 118-349 (NGATQGLLGQ…AYVHSLGGGE (232 aa)) are periplasmic. Cytochrome c domains are found at residues 168–258 (YTAN…LELG) and 265–346 (ALAA…HSLG). Positions 181, 184, 185, 233, 278, 281, 282, and 323 each coordinate heme c.

This sequence belongs to the CcoP / FixP family. As to quaternary structure, component of the cbb3-type cytochrome c oxidase at least composed of CcoN, CcoO, CcoQ and CcoP. Heme c is required as a cofactor.

It is found in the cell inner membrane. It functions in the pathway energy metabolism; oxidative phosphorylation. In terms of biological role, C-type cytochrome. Part of the cbb3-type cytochrome c oxidase complex. CcoP subunit is required for transferring electrons from donor cytochrome c via its heme groups to CcoO subunit. From there, electrons are shuttled to the catalytic binuclear center of CcoN subunit where oxygen reduction takes place. The complex also functions as a proton pump. This chain is Cbb3-type cytochrome c oxidase subunit CcoP, found in Paracoccus denitrificans (strain Pd 1222).